The primary structure comprises 260 residues: Thiazole synthase (260 aa).

K96 functions as the Schiff-base intermediate with DXP in the catalytic mechanism. 1-deoxy-D-xylulose 5-phosphate contacts are provided by residues G157, 184 to 185 (AG), and 206 to 207 (NT).

This sequence belongs to the ThiG family. In terms of assembly, homotetramer. Forms heterodimers with either ThiH or ThiS.

It localises to the cytoplasm. It catalyses the reaction [ThiS sulfur-carrier protein]-C-terminal-Gly-aminoethanethioate + 2-iminoacetate + 1-deoxy-D-xylulose 5-phosphate = [ThiS sulfur-carrier protein]-C-terminal Gly-Gly + 2-[(2R,5Z)-2-carboxy-4-methylthiazol-5(2H)-ylidene]ethyl phosphate + 2 H2O + H(+). It participates in cofactor biosynthesis; thiamine diphosphate biosynthesis. In terms of biological role, catalyzes the rearrangement of 1-deoxy-D-xylulose 5-phosphate (DXP) to produce the thiazole phosphate moiety of thiamine. Sulfur is provided by the thiocarboxylate moiety of the carrier protein ThiS. In vitro, sulfur can be provided by H(2)S. The sequence is that of Thiazole synthase from Bradyrhizobium diazoefficiens (strain JCM 10833 / BCRC 13528 / IAM 13628 / NBRC 14792 / USDA 110).